Consider the following 87-residue polypeptide: Sec-independent protein translocase protein TatA (87 aa).

Residues 1–21 (MGSFSITHWLILLVVVVVVFG) traverse the membrane as a helical segment. Residues 56 to 87 (VLDHDAGTNPPNITGTQSDTTSANKVDDTHNV) form a disordered region. The segment covering 64-79 (NPPNITGTQSDTTSAN) has biased composition (polar residues).

The protein belongs to the TatA/E family. The Tat system comprises two distinct complexes: a TatABC complex, containing multiple copies of TatA, TatB and TatC subunits, and a separate TatA complex, containing only TatA subunits. Substrates initially bind to the TatABC complex, which probably triggers association of the separate TatA complex to form the active translocon.

The protein localises to the cell inner membrane. Its function is as follows. Part of the twin-arginine translocation (Tat) system that transports large folded proteins containing a characteristic twin-arginine motif in their signal peptide across membranes. TatA could form the protein-conducting channel of the Tat system. In Psychrobacter arcticus (strain DSM 17307 / VKM B-2377 / 273-4), this protein is Sec-independent protein translocase protein TatA.